Consider the following 729-residue polypeptide: Fatty acid oxidation complex subunit alpha (729 aa).

Residues 1–189 form an enoyl-CoA hydratase/isomerase region; that stretch reads MLYKGDTLYL…KIGLVDGVVK (189 aa). Position 296 (aspartate 296) interacts with substrate. Residues 311–729 form a 3-hydroxyacyl-CoA dehydrogenase region; the sequence is ETPKQAAVLG…ARPVGDLKTA (419 aa). Residues methionine 324, aspartate 343, 400–402, lysine 407, and serine 429 contribute to the NAD(+) site; that span reads VVE. Histidine 450 (for 3-hydroxyacyl-CoA dehydrogenase activity) is an active-site residue. Asparagine 453 is a binding site for NAD(+). 2 residues coordinate substrate: asparagine 500 and tyrosine 660. Residues 708–729 form a disordered region; the sequence is RHNEPYYPPVEPARPVGDLKTA.

This sequence in the N-terminal section; belongs to the enoyl-CoA hydratase/isomerase family. The protein in the C-terminal section; belongs to the 3-hydroxyacyl-CoA dehydrogenase family. In terms of assembly, heterotetramer of two alpha chains (FadB) and two beta chains (FadA).

The enzyme catalyses a (3S)-3-hydroxyacyl-CoA + NAD(+) = a 3-oxoacyl-CoA + NADH + H(+). It catalyses the reaction a (3S)-3-hydroxyacyl-CoA = a (2E)-enoyl-CoA + H2O. The catalysed reaction is a 4-saturated-(3S)-3-hydroxyacyl-CoA = a (3E)-enoyl-CoA + H2O. It carries out the reaction (3S)-3-hydroxybutanoyl-CoA = (3R)-3-hydroxybutanoyl-CoA. The enzyme catalyses a (3Z)-enoyl-CoA = a 4-saturated (2E)-enoyl-CoA. It catalyses the reaction a (3E)-enoyl-CoA = a 4-saturated (2E)-enoyl-CoA. It functions in the pathway lipid metabolism; fatty acid beta-oxidation. Its function is as follows. Involved in the aerobic and anaerobic degradation of long-chain fatty acids via beta-oxidation cycle. Catalyzes the formation of 3-oxoacyl-CoA from enoyl-CoA via L-3-hydroxyacyl-CoA. It can also use D-3-hydroxyacyl-CoA and cis-3-enoyl-CoA as substrate. The sequence is that of Fatty acid oxidation complex subunit alpha from Escherichia coli O81 (strain ED1a).